The sequence spans 728 residues: Golgin subfamily A member 5 (728 aa).

N-acetylserine is present on Ser2. Residues 2 to 695 (SWFADLAGRA…IFLRRYPIAR (694 aa)) lie on the Cytoplasmic side of the membrane. A dimethylated arginine mark is found at Arg27 and Arg89. Residues 88 to 202 (SRTGGDASHP…KKSTEESTVS (115 aa)) are disordered. At Ser116 the chain carries Phosphoserine. The segment covering 134–146 (PTGRVEIKKEKGK) has biased composition (basic and acidic residues). Residues 152–167 (SSQSSAVSSVTTSVTT) show a composition bias toward low complexity. Positions 173–187 (ENSGSQSPEVSSSDS) are enriched in polar residues. A coiled-coil region spans residues 216–628 (GSMSHELSNL…LEQQLHSAAT (413 aa)). Residues 696–716 (VFVIIYMALLHLWVMIVLLTY) traverse the membrane as a helical; Anchor for type IV membrane protein segment. Topologically, residues 717–728 (SPEMHHDQPYGK) are lumenal.

Homodimer. Interacts with RAB1A that has been activated by GTP-binding. Interacts with isoform CASP of CUX1. Highly phosphorylated during mitosis. Phosphorylation is barely detectable during interphase.

Its subcellular location is the golgi apparatus membrane. In terms of biological role, involved in maintaining Golgi structure. Stimulates the formation of Golgi stacks and ribbons. Involved in intra-Golgi retrograde transport. This Rattus norvegicus (Rat) protein is Golgin subfamily A member 5 (Golga5).